Consider the following 473-residue polypeptide: H(+)/Cl(-) exchange transporter ClcA (473 aa).

Topologically, residues 1–32 (MKTDTSTFLAQQIVRLRRRDQIRRLMQRDKTP) are cytoplasmic. Residues 33–69 (LAILFMAAVVGTLTGLVGVAFEKTVSWVQNMRIGALV) traverse the membrane as a helical segment. Over 70–76 (QVADHAF) the chain is Periplasmic. The chain crosses the membrane as a helical span at residues 77–100 (LLWPLAFILSALLAMVGYFLVRKF). The Selectivity filter part_1 signature appears at 106-110 (GSGIP). Residue serine 107 participates in chloride binding. Positions 109–116 (IPEIEGAL) form an intramembrane region, helical. Over 117-123 (EELRPVR) the chain is Cytoplasmic. A run of 2 helical transmembrane segments spans residues 124-141 (WWRVLPVKFIGGMGTLGA) and 148-166 (EGPTVQIGGNLGRMVLDVF). Positions 146 to 150 (GREGP) match the Selectivity filter part_2 motif. Over 167-176 (RMRSAEARHT) the chain is Cytoplasmic. 2 intramembrane regions (helical) span residues 177 to 189 (LLATGAAAGLSAA) and 193 to 201 (PLAGILFII). Over 202–214 (EEMRPQFRYNLIS) the chain is Cytoplasmic. A helical transmembrane segment spans residues 215–232 (IKAVFTGVIMSSIVFRIF). Residues 233–252 (NGEAPIIEVGKLSDAPVNTL) lie on the Periplasmic side of the membrane. The helical transmembrane segment at 253–281 (WLYLILGIIFGCVGPVFNSLVLRTQDMFQ) threads the bilayer. Residues 282–287 (RFHGGE) are Cytoplasmic-facing. Residues 288–309 (IKKWVLMGGAIGGLCGILGLIE) form a helical membrane-spanning segment. Over 310-329 (PAAAGGGFNLIPIAAAGNFS) the chain is Periplasmic. 2 consecutive transmembrane segments (helical) span residues 330–349 (VGLLLFIFITRVVTTLLCFS) and 355–376 (GIFAPMLALGTLLGTAFGMAAA). The short motif at 355-359 (GIFAP) is the Selectivity filter part_3 element. Chloride-binding residues include isoleucine 356 and phenylalanine 357. Residues 377-386 (VLFPQYHPEA) are Periplasmic-facing. An intramembrane region (helical) is located at residues 387–401 (GTFAIAGMGALMAAS). An intramembrane region (note=Loop between two helices) is located at residues 402-404 (VRA). The segment at residues 405–416 (PLTGIVLVLEMT) is an intramembrane region (helical). The note=Loop between two helices intramembrane region spans 417-421 (DNYQL). Residues 422 to 438 (ILPMIITCLGATLLAQF) form a helical membrane-spanning segment. Over 439–473 (LGGKPLYSTILARTLAKQDAEQAAKNQNAPAGENT) the chain is Cytoplasmic. Tyrosine 445 is a chloride binding site.

This sequence belongs to the chloride channel (TC 2.A.49) family. ClcA subfamily. As to quaternary structure, homodimer.

It is found in the cell inner membrane. The enzyme catalyses 2 chloride(in) + H(+)(out) = 2 chloride(out) + H(+)(in). Its function is as follows. Proton-coupled chloride transporter. Functions as antiport system and exchanges two chloride ions for 1 proton. Probably acts as an electrical shunt for an outwardly-directed proton pump that is linked to amino acid decarboxylation, as part of the extreme acid resistance (XAR) response. The protein is H(+)/Cl(-) exchange transporter ClcA of Salmonella paratyphi A (strain AKU_12601).